A 369-amino-acid chain; its full sequence is Small ribosomal subunit biogenesis GTPase RsgA (369 aa).

The 159-residue stretch at 88 to 246 (RTVLERPPVA…LADTPGFNQP (159 aa)) folds into the CP-type G domain. Residues 137–140 (NKQD) and 188–196 (GPSGVGKSS) each bind GTP. Cys271, Cys276, His278, and Cys284 together coordinate Zn(2+). Residues 307–369 (QNPENSRETD…DLDNLQEDWE (63 aa)) are disordered. The segment covering 359–369 (TDLDNLQEDWE) has biased composition (acidic residues).

This sequence belongs to the TRAFAC class YlqF/YawG GTPase family. RsgA subfamily. Monomer. Associates with 30S ribosomal subunit, binds 16S rRNA. Requires Zn(2+) as cofactor.

Its subcellular location is the cytoplasm. Functionally, one of several proteins that assist in the late maturation steps of the functional core of the 30S ribosomal subunit. Helps release RbfA from mature subunits. May play a role in the assembly of ribosomal proteins into the subunit. Circularly permuted GTPase that catalyzes slow GTP hydrolysis, GTPase activity is stimulated by the 30S ribosomal subunit. The polypeptide is Small ribosomal subunit biogenesis GTPase RsgA (Synechocystis sp. (strain ATCC 27184 / PCC 6803 / Kazusa)).